Consider the following 309-residue polypeptide: Methionyl-tRNA formyltransferase (309 aa).

Position 109 to 112 (Ser-109 to Pro-112) interacts with (6S)-5,6,7,8-tetrahydrofolate.

It belongs to the Fmt family.

The catalysed reaction is L-methionyl-tRNA(fMet) + (6R)-10-formyltetrahydrofolate = N-formyl-L-methionyl-tRNA(fMet) + (6S)-5,6,7,8-tetrahydrofolate + H(+). Its function is as follows. Attaches a formyl group to the free amino group of methionyl-tRNA(fMet). The formyl group appears to play a dual role in the initiator identity of N-formylmethionyl-tRNA by promoting its recognition by IF2 and preventing the misappropriation of this tRNA by the elongation apparatus. The sequence is that of Methionyl-tRNA formyltransferase from Clostridioides difficile (strain 630) (Peptoclostridium difficile).